The chain runs to 474 residues: GTPase Der (474 aa).

EngA-type G domains are found at residues 2 to 166 (LRIA…NVPE) and 212 to 385 (LKIA…ETVS). Residues 8-15 (GRPNVGKS), 55-59 (DTGGV), 118-121 (NKAD), 218-225 (GRPNVGKS), 265-269 (DTAGL), and 330-333 (NKWD) each bind GTP. One can recognise a KH-like domain in the interval 386-470 (SKVPTPVVNK…PFDLEFKEKT (85 aa)).

Belongs to the TRAFAC class TrmE-Era-EngA-EngB-Septin-like GTPase superfamily. EngA (Der) GTPase family. Associates with the 50S ribosomal subunit.

In terms of biological role, GTPase that plays an essential role in the late steps of ribosome biogenesis. This chain is GTPase Der, found in Chlamydia caviae (strain ATCC VR-813 / DSM 19441 / 03DC25 / GPIC) (Chlamydophila caviae).